A 343-amino-acid polypeptide reads, in one-letter code: Aspartate beta-hydroxylase domain-containing protein 2 (343 aa).

Over 1–31 the chain is Cytoplasmic; the sequence is MWLEWLVAWSWSLDGLRDCIATGIQSVRDCD. Residues 32–52 form a helical membrane-spanning segment; the sequence is GTAVITVACLLILFVWYCYHV. At 53–343 the chain is on the lumenal side; it reads GREQPRPHVS…ALDFIFAPGR (291 aa). 2 N-linked (GlcNAc...) asparagine glycosylation sites follow: asparagine 77 and asparagine 185. 2 residues coordinate 2-oxoglutarate: tryptophan 202 and serine 246. A Fe cation-binding site is contributed by histidine 257. Residue 266–268 coordinates 2-oxoglutarate; the sequence is RCH. Histidine 302 serves as a coordination point for Fe cation. Arginine 315 is a 2-oxoglutarate binding site.

This sequence belongs to the aspartyl/asparaginyl beta-hydroxylase family. Fe cation serves as cofactor.

It localises to the membrane. Functionally, may function as 2-oxoglutarate-dependent dioxygenase. The polypeptide is Aspartate beta-hydroxylase domain-containing protein 2 (Asphd2) (Mus musculus (Mouse)).